The chain runs to 430 residues: Tektin-2 (430 aa).

Coiled coils occupy residues 75–162 and 226–380; these read KEML…FQHL and KNRA…IACK.

This sequence belongs to the tektin family. In terms of assembly, microtubule inner protein component of sperm flagellar doublet microtubules. May interact with CCDC172. Tyrosine phosphorylated. In terms of processing, ubiquitinated, leading to its degradation. Deubiquitinated by USP16, promoting its stability.

It is found in the cytoplasm. It localises to the cytoskeleton. Its subcellular location is the cilium axoneme. The protein resides in the flagellum axoneme. The protein localises to the microtubule organizing center. Its function is as follows. Microtubule inner protein (MIP) part of the dynein-decorated doublet microtubules (DMTs) in cilia and flagellar axoneme. Plays a key role in the assembly or attachment of the inner dynein arm to microtubules in sperm flagella and tracheal cilia. Forms filamentous polymers in the walls of ciliary and flagellar microtubules. This is Tektin-2 (Tekt2) from Rattus norvegicus (Rat).